A 294-amino-acid chain; its full sequence is 4-hydroxy-tetrahydrodipicolinate synthase (294 aa).

Thr45 serves as a coordination point for pyruvate. The active-site Proton donor/acceptor is Tyr133. The active-site Schiff-base intermediate with substrate is Lys162. Ile204 lines the pyruvate pocket.

This sequence belongs to the DapA family. As to quaternary structure, homotetramer; dimer of dimers.

Its subcellular location is the cytoplasm. It catalyses the reaction L-aspartate 4-semialdehyde + pyruvate = (2S,4S)-4-hydroxy-2,3,4,5-tetrahydrodipicolinate + H2O + H(+). It participates in amino-acid biosynthesis; L-lysine biosynthesis via DAP pathway; (S)-tetrahydrodipicolinate from L-aspartate: step 3/4. Catalyzes the condensation of (S)-aspartate-beta-semialdehyde [(S)-ASA] and pyruvate to 4-hydroxy-tetrahydrodipicolinate (HTPA). This Bartonella quintana (strain Toulouse) (Rochalimaea quintana) protein is 4-hydroxy-tetrahydrodipicolinate synthase.